Here is a 234-residue protein sequence, read N- to C-terminus: Bromodomain-containing protein DDB_G0271118 (234 aa).

A Bromo domain is found at M1–V60. Positions N134–S194 are enriched in low complexity. The disordered stretch occupies residues N134 to N209.

This chain is Bromodomain-containing protein DDB_G0271118, found in Dictyostelium discoideum (Social amoeba).